We begin with the raw amino-acid sequence, 307 residues long: Malate dehydrogenase (307 aa).

NAD(+) contacts are provided by residues 8-13 (GAGNVG) and aspartate 32. Positions 81 and 87 each coordinate substrate. Residues asparagine 94 and 117–119 (VSN) each bind NAD(+). The substrate site is built by asparagine 119 and arginine 150. The active-site Proton acceptor is histidine 174.

This sequence belongs to the LDH/MDH superfamily. MDH type 3 family.

It carries out the reaction (S)-malate + NAD(+) = oxaloacetate + NADH + H(+). Functionally, catalyzes the reversible oxidation of malate to oxaloacetate. The chain is Malate dehydrogenase from Dehalococcoides mccartyi (strain CBDB1).